Here is a 241-residue protein sequence, read N- to C-terminus: Probable transcriptional regulatory protein RSc2190 (241 aa).

This sequence belongs to the TACO1 family.

The protein localises to the cytoplasm. This Ralstonia nicotianae (strain ATCC BAA-1114 / GMI1000) (Ralstonia solanacearum) protein is Probable transcriptional regulatory protein RSc2190.